A 2622-amino-acid polypeptide reads, in one-letter code: Ankyrin-3 (2622 aa).

The segment at 1-44 is disordered; it reads MAHAASQLKKNRDLEINAEEETEKKKKHRKRSRDRKKKSDANAS. Over residues 25–38 the composition is skewed to basic residues; the sequence is KKKHRKRSRDRKKK. Ser-39 bears the Phosphoserine mark. ANK repeat units lie at residues 73 to 102, 106 to 135, 139 to 168, 172 to 201, 203 to 230, 242 to 271, 275 to 304, 308 to 337, 341 to 370, 374 to 403, 407 to 436, 440 to 469, 473 to 502, 506 to 535, 539 to 568, 572 to 601, 605 to 634, 638 to 667, 671 to 700, 704 to 733, 737 to 766, 770 to 799, and 803 to 832; these read NGLN…NVDA, KGNT…NVNA, NGFT…SQSL, DGFT…KGKV, LPAL…NADI, SGFT…AVDF, NDIT…KIDA, DGLT…PILS, NGLS…PVDD, DYLT…NPNA, NGFT…SIQA, SGLT…SPNT, RGET…QVEA, DDQT…SPNA, SGYT…SLSI, KGFT…SPDA, SGLT…SPHA, NGYT…DANA, QGIA…NVNL, SGLT…HVDA, MGYT…KVNA, NGYT…SPNE, and NGNT…EIMT. Ser-631 is modified (phosphoserine). Phosphoserine is present on residues Val-851, Ser-855, Ser-869, Ser-875, Ser-921, Ser-924, Ser-930, Ser-965, Ser-967, and Ser-1121. A disordered region spans residues 868 to 889; the sequence is LSDGEYISDGEEGEDAITGDTD. Acidic residues predominate over residues 873–884; it reads YISDGEEGEDAI. ZU5 domains lie at 992–1147 and 1149–1296; these read FLVS…VVSR and KQES…LADC. Ser-1458 and Ser-1469 each carry phosphoserine. The tract at residues 1510 to 1539 is disordered; the sequence is TPITVPGPAKSGSLSSSPSNTPSASPLKSI. Residues 1515–1536 are compositionally biased toward low complexity; sequence PGPAKSGSLSSSPSNTPSASPL. Ser-1621, Ser-1624, Ser-1679, Ser-1984, Ser-2102, Ser-2114, and Ser-2117 each carry phosphoserine. Disordered regions lie at residues 1968–1992, 2099–2147, and 2292–2312; these read VESK…WTEF, ILES…FHEV, and SPDV…KDNQ. Basic and acidic residues predominate over residues 1977 to 1986; sequence PKSDKGHSPE. The segment covering 2106-2127 has biased composition (basic and acidic residues); sequence FSQHDQDKSPLSDSGFETRSEK. Over residues 2128-2137 the composition is skewed to polar residues; that stretch reads TPSAPQSAES. One can recognise a Death domain in the interval 2336–2420; the sequence is TDIRMAIVAD…DIVTLLEGPI (85 aa). Residues Ser-2457, Ser-2475, and Ser-2544 each carry the phosphoserine modification. The disordered stretch occupies residues 2568 to 2622; the sequence is CVPVGMKKMTRTPADGKARLNLQEEEGSARSEPKQGEGYKVKTKKEIRNVEKKAH. The span at 2594–2622 shows a compositional bias: basic and acidic residues; the sequence is GSARSEPKQGEGYKVKTKKEIRNVEKKAH.

In terms of assembly, may be a constituent of a NFASC/NRCAM/ankyrin G complex. Interacts with RHBG. Directly interacts with DMD and betaDAG1; this interaction does not interfere with DMD-binding and is required for DMD and betaDAG1 retention at costameres. Interacts (via N-terminal ANK repeats) with SCHIP1 isoform 7 (via C-terminus); this interaction is required for the localization at axon initial segments (AISs) and nodes of Ranvier (NRs). Interacts with PLEC and FLNC. Interacts (via ANK repeats) with IQCJ-SCHIP1; required for IQCJ-SCHIP1 localization at axon initial segments (AIS) and nodes of Ranvier. Interacts with SCHIP1. Interacts with KCNA1; this inhibits channel activity. Interacts with SCN5A. Interacts with PKP2 and GJA1/CX43. Interacts (via its C-terminal muscle-specific Obscurin/Titin-Binding-related domain sequence) with PLEC and FLNC. In terms of tissue distribution, expressed in the heart (at protein level). Expressed in skeletal muscle (at protein level). Expressed at highest levels in brain and testis, followed by skin, kidney, liver and spleen. As to expression, may be specifically expressed in muscle tissues, including heart and skeletal muscle (extensor digitorum longus) (at protein level). Expressed in skeletal muscle, brain, lung, heart, testes and kidney.

It localises to the cytoplasm. The protein localises to the cytoskeleton. It is found in the cell projection. Its subcellular location is the axon. The protein resides in the cell membrane. It localises to the sarcolemma. The protein localises to the postsynaptic cell membrane. It is found in the lysosome. Its subcellular location is the T-tubule. Its function is as follows. Membrane-cytoskeleton linker. May participate in the maintenance/targeting of ion channels and cell adhesion molecules at the nodes of Ranvier and axonal initial segments. In skeletal muscle, required for costamere localization of DMD and betaDAG1. Regulates KCNA1 channel activity in function of dietary Mg(2+) levels, and thereby contributes to the regulation of renal Mg(2+) reabsorption. Required for intracellular adhesion and junctional conductance in myocytes, potentially via stabilization of GJA1/CX43 protein abundance and promotion of PKP2, GJA1/CX43, and SCN5A/Nav1.5 localization to cell-cell junctions. The chain is Ankyrin-3 (Ank3) from Rattus norvegicus (Rat).